Consider the following 186-residue polypeptide: MILPITIYSDEVLRRKAKPLKGIDTSHEELIGNMIESMRNASGIGLAAPQIGLSMRLLIVDLSPVQGYENAEPMVVINPHILAVKGYNAMEEGCLSIPDIHADVVRPSSIQLKYRNEHFEERVDEFSALMARVLQHEIDHLDGTLFVDKLQRRDRRKVQKSLEDIAAGKVHTTYPVAEINQGAKAS.

C94 and H136 together coordinate Fe cation. E137 is a catalytic residue. A Fe cation-binding site is contributed by H140.

Belongs to the polypeptide deformylase family. It depends on Fe(2+) as a cofactor.

The enzyme catalyses N-terminal N-formyl-L-methionyl-[peptide] + H2O = N-terminal L-methionyl-[peptide] + formate. Its function is as follows. Removes the formyl group from the N-terminal Met of newly synthesized proteins. Requires at least a dipeptide for an efficient rate of reaction. N-terminal L-methionine is a prerequisite for activity but the enzyme has broad specificity at other positions. The chain is Peptide deformylase from Prosthecochloris aestuarii (strain DSM 271 / SK 413).